We begin with the raw amino-acid sequence, 222 residues long: Leucyl/phenylalanyl-tRNA--protein transferase (222 aa).

The protein belongs to the L/F-transferase family.

The protein resides in the cytoplasm. The catalysed reaction is N-terminal L-lysyl-[protein] + L-leucyl-tRNA(Leu) = N-terminal L-leucyl-L-lysyl-[protein] + tRNA(Leu) + H(+). The enzyme catalyses N-terminal L-arginyl-[protein] + L-leucyl-tRNA(Leu) = N-terminal L-leucyl-L-arginyl-[protein] + tRNA(Leu) + H(+). It catalyses the reaction L-phenylalanyl-tRNA(Phe) + an N-terminal L-alpha-aminoacyl-[protein] = an N-terminal L-phenylalanyl-L-alpha-aminoacyl-[protein] + tRNA(Phe). In terms of biological role, functions in the N-end rule pathway of protein degradation where it conjugates Leu, Phe and, less efficiently, Met from aminoacyl-tRNAs to the N-termini of proteins containing an N-terminal arginine or lysine. This Legionella pneumophila (strain Corby) protein is Leucyl/phenylalanyl-tRNA--protein transferase.